A 204-amino-acid chain; its full sequence is Glycerol-3-phosphate acyltransferase (204 aa).

Transmembrane regions (helical) follow at residues 8–28, 53–73, 81–101, 116–136, and 155–175; these read ILIF…CYIF, VPAA…VVIA, FITA…IFFG, FGFS…VAII, and VIFT…IIIL.

The protein belongs to the PlsY family. In terms of assembly, probably interacts with PlsX.

Its subcellular location is the cell inner membrane. It carries out the reaction an acyl phosphate + sn-glycerol 3-phosphate = a 1-acyl-sn-glycero-3-phosphate + phosphate. Its pathway is lipid metabolism; phospholipid metabolism. In terms of biological role, catalyzes the transfer of an acyl group from acyl-phosphate (acyl-PO(4)) to glycerol-3-phosphate (G3P) to form lysophosphatidic acid (LPA). This enzyme utilizes acyl-phosphate as fatty acyl donor, but not acyl-CoA or acyl-ACP. The polypeptide is Glycerol-3-phosphate acyltransferase (Francisella tularensis subsp. tularensis (strain FSC 198)).